Here is a 141-residue protein sequence, read N- to C-terminus: Nucleoside diphosphate kinase (141 aa).

Lys9, Phe57, Arg85, Thr91, Arg102, and Asn112 together coordinate ATP. Catalysis depends on His115, which acts as the Pros-phosphohistidine intermediate.

This sequence belongs to the NDK family. In terms of assembly, homotetramer. It depends on Mg(2+) as a cofactor.

It is found in the cytoplasm. The enzyme catalyses a 2'-deoxyribonucleoside 5'-diphosphate + ATP = a 2'-deoxyribonucleoside 5'-triphosphate + ADP. The catalysed reaction is a ribonucleoside 5'-diphosphate + ATP = a ribonucleoside 5'-triphosphate + ADP. Its function is as follows. Major role in the synthesis of nucleoside triphosphates other than ATP. The ATP gamma phosphate is transferred to the NDP beta phosphate via a ping-pong mechanism, using a phosphorylated active-site intermediate. In Prosthecochloris aestuarii (strain DSM 271 / SK 413), this protein is Nucleoside diphosphate kinase.